We begin with the raw amino-acid sequence, 705 residues long: Polyribonucleotide nucleotidyltransferase (705 aa).

Residues D486 and D492 each contribute to the Mg(2+) site. Residues 553 to 612 (PRIHTMKVSQDKIRDIIGKGGATIRQLTEETGTTIEIEDDGTVKIAATSGEQAEDAINRI) form the KH domain. One can recognise an S1 motif domain in the interval 622-690 (GTLYTGKVVR…RQGRVRLSIK (69 aa)).

The protein belongs to the polyribonucleotide nucleotidyltransferase family. Component of the RNA degradosome, which is a multiprotein complex involved in RNA processing and mRNA degradation. It depends on Mg(2+) as a cofactor.

The protein resides in the cytoplasm. It catalyses the reaction RNA(n+1) + phosphate = RNA(n) + a ribonucleoside 5'-diphosphate. Its function is as follows. Involved in mRNA degradation. Catalyzes the phosphorolysis of single-stranded polyribonucleotides processively in the 3'- to 5'-direction. The chain is Polyribonucleotide nucleotidyltransferase from Colwellia psychrerythraea (strain 34H / ATCC BAA-681) (Vibrio psychroerythus).